Consider the following 356-residue polypeptide: MKKKVLVGMSGGVDSSVAAYLLKEQGYEVIGVTMQIWQDDEEFIEKEGGCCSLSAVADARRVANKIGIPFYVMNFKDAFKRNVIDYFVDEYMEGRTPNPCITCNKFIKFSSFLDKAMAMGIDYVATGHYAIIEKHNDRYIIKKSEDDKKDQTYALYNLTQFQLERTLMPCGQYKKSKIREIAKEIGLRVHNKKDSEEICFIPDNDHGRYIKNRFPNKVREGNFVDKQGNVLGRHKGIVYYTIGQRKGLGIAFGKPMYVVDINPFRNEVVLGDLEDLLNTELIAKDINYIPFDTLKEPMEVEAKIRYSQTPSKAIITPIEDGRVRVNFQEKQRAITKGQSVVFYKDDLLIGGGIIEK.

ATP-binding positions include 8–15 (GMSGGVDS) and Met-34. Cys-103 functions as the Nucleophile in the catalytic mechanism. Cys-103 and Cys-199 form a disulfide bridge. Gly-127 is a binding site for ATP. An interaction with tRNA region spans residues 149-151 (KDQ). Cys-199 (cysteine persulfide intermediate) is an active-site residue. The tract at residues 305–306 (RY) is interaction with tRNA.

This sequence belongs to the MnmA/TRMU family.

It localises to the cytoplasm. The enzyme catalyses S-sulfanyl-L-cysteinyl-[protein] + uridine(34) in tRNA + AH2 + ATP = 2-thiouridine(34) in tRNA + L-cysteinyl-[protein] + A + AMP + diphosphate + H(+). In terms of biological role, catalyzes the 2-thiolation of uridine at the wobble position (U34) of tRNA, leading to the formation of s(2)U34. The sequence is that of tRNA-specific 2-thiouridylase MnmA 1 from Clostridium botulinum (strain Loch Maree / Type A3).